Reading from the N-terminus, the 305-residue chain is tRNA pseudouridine synthase B (305 aa).

Residue Asp39 is the Nucleophile of the active site. A PUA domain is found at 237–305; the sequence is LPVIIVPGEF…FLLKPHKVLK (69 aa).

Belongs to the pseudouridine synthase TruB family. Type 1 subfamily.

The catalysed reaction is uridine(55) in tRNA = pseudouridine(55) in tRNA. Responsible for synthesis of pseudouridine from uracil-55 in the psi GC loop of transfer RNAs. In Moorella thermoacetica (strain ATCC 39073 / JCM 9320), this protein is tRNA pseudouridine synthase B.